Reading from the N-terminus, the 497-residue chain is Cysteine-rich secretory protein LCCL domain-containing 2 (497 aa).

Residues 1 to 22 form the signal peptide; sequence MSCVLGGVIPLGLLFLVCGSQG. An N-linked (GlcNAc...) asparagine glycan is attached at Asn-27. An SCP domain is found at 62 to 200; sequence LHNKLRGQVQ…ENAVYFVCNY (139 aa). LCCL domains lie at 284-379 and 385-488; these read MTQV…SSSF and KVQD…RDGK. 4 cysteine pairs are disulfide-bonded: Cys-290-Cys-308, Cys-312-Cys-332, Cys-391-Cys-413, and Cys-417-Cys-440.

It belongs to the CRISP family. Binds to heparin, dermatan sulfate and chondroitin sulfate.

The protein localises to the secreted. Promotes matrix assembly. The protein is Cysteine-rich secretory protein LCCL domain-containing 2 (CRISPLD2) of Homo sapiens (Human).